The sequence spans 420 residues: Enolase (420 aa).

Residue glutamine 162 participates in (2R)-2-phosphoglycerate binding. Catalysis depends on glutamate 206, which acts as the Proton donor. Aspartate 241, glutamate 282, and aspartate 308 together coordinate Mg(2+). Positions 333, 362, 363, and 384 each coordinate (2R)-2-phosphoglycerate. Catalysis depends on lysine 333, which acts as the Proton acceptor.

Belongs to the enolase family. Requires Mg(2+) as cofactor.

The protein resides in the cytoplasm. Its subcellular location is the secreted. It localises to the cell surface. It carries out the reaction (2R)-2-phosphoglycerate = phosphoenolpyruvate + H2O. It functions in the pathway carbohydrate degradation; glycolysis; pyruvate from D-glyceraldehyde 3-phosphate: step 4/5. In terms of biological role, catalyzes the reversible conversion of 2-phosphoglycerate (2-PG) into phosphoenolpyruvate (PEP). It is essential for the degradation of carbohydrates via glycolysis. This Methanothrix thermoacetophila (strain DSM 6194 / JCM 14653 / NBRC 101360 / PT) (Methanosaeta thermophila) protein is Enolase.